The chain runs to 473 residues: ATP synthase subunit beta (473 aa).

Residue glycine 153 to threonine 160 coordinates ATP.

The protein belongs to the ATPase alpha/beta chains family. F-type ATPases have 2 components, CF(1) - the catalytic core - and CF(0) - the membrane proton channel. CF(1) has five subunits: alpha(3), beta(3), gamma(1), delta(1), epsilon(1). CF(0) has three main subunits: a(1), b(2) and c(9-12). The alpha and beta chains form an alternating ring which encloses part of the gamma chain. CF(1) is attached to CF(0) by a central stalk formed by the gamma and epsilon chains, while a peripheral stalk is formed by the delta and b chains.

Its subcellular location is the cell inner membrane. The enzyme catalyses ATP + H2O + 4 H(+)(in) = ADP + phosphate + 5 H(+)(out). Produces ATP from ADP in the presence of a proton gradient across the membrane. The catalytic sites are hosted primarily by the beta subunits. The polypeptide is ATP synthase subunit beta (Rickettsia bellii (strain OSU 85-389)).